We begin with the raw amino-acid sequence, 314 residues long: 3'-5' exoribonuclease YhaM (314 aa).

Positions 163–279 constitute an HD domain; sequence HVVSMLDLAK…LHYIDNLDAK (117 aa).

This sequence belongs to the YhaM family.

In terms of biological role, shows a 3'-5' exoribonuclease activity. This Bacillus anthracis (strain CDC 684 / NRRL 3495) protein is 3'-5' exoribonuclease YhaM.